The chain runs to 534 residues: Pentatricopeptide repeat-containing protein At5g59600 (534 aa).

PPR repeat units lie at residues 50–80, 81–115, 116–150, 151–181, 182–216, 217–251, 252–286, 287–321, 322–352, 353–387, 388–418, and 424–454; these read LTRI…MPKR, DISG…GLKL, DAFI…SYES, DAFI…LGEQ, DLVV…GIKP, DVIT…GYKP, DVVS…GLYP, NSAT…GLED, HGFV…TPKK, TTVT…GEKL, DHLT…MQNK, and RLEH…MRME. A type E motif region spans residues 459–534; sequence VWGALLAACR…FLGSSWVETV (76 aa).

It belongs to the PPR family. PCMP-E subfamily.

This chain is Pentatricopeptide repeat-containing protein At5g59600 (PCMP-E1), found in Arabidopsis thaliana (Mouse-ear cress).